The sequence spans 465 residues: MAKQAPDVGDYKYGFHDEDVSIFRSERGLTENIVTEISKMKEEPQWMLDFRLKALKLFYKMPMPQWGGDLSELDFDDITYYVKPSEHTERSWDEVPEEIKRTFDKLGIPEAEQKYLAGVSAQYESEVVYHNMEKELEEKGIIFKDTDSALRENEELFREYFASVVPAADNKFAALNSAVWSGGSFIYVPKNVKLDTPLQAYFRINSENMGQFERTLIIADEGASVNYVEGCTAPVYSTSSLHSAVVEIIVHKDAHVRYTTIQNWANNVYNLVTKRTFVHENGNMEWVDGNLGSKLTMKYPNCVLLGEGAKGSTLSIAFASKGQVQDAGAKMIHKAPNTSSTIVSKSISKNGGKVIYRGIVHFGRKAKGARSNIECDTLILDNESTSDTIPYNEVFNDNISLEHEAKVSKVSEEQLFYLMSRGISEEEATEMIVMGFIEPFTKELPMEYAVEMNRLIKFEMEGSIG.

This sequence belongs to the iron-sulfur cluster assembly SufBD family.

In Staphylococcus epidermidis (strain ATCC 12228 / FDA PCI 1200), this protein is Iron-sulfur cluster assembly SufBD family protein SE_0610.